We begin with the raw amino-acid sequence, 276 residues long: Radial spoke head protein 9 homolog (276 aa).

The protein belongs to the flagellar radial spoke RSP9 family. In terms of assembly, component of the axonemal radial spoke 1 (RS1) and 2 (RS2) complexes, at least composed of spoke head proteins RSPH1, RSPH3, RSPH9 and the cilia-specific component RSPH4A or sperm-specific component RSPH6A, spoke stalk proteins RSPH14, DNAJB13, DYDC1, ROPN1L and NME5, and the RS1 complex-specific anchor protein IQUB. Interacts with IQUB. Interacts with RSPH3B. Interacts with RSPH4A. Interacts with RSPH6A. Interacts with CFAP61. Interacts with LRRC23. As to expression, expressed in the testis, trachea, lung, oviduct and ependymal cells (at protein level).

The protein resides in the cytoplasm. It localises to the cytoskeleton. It is found in the cilium axoneme. The protein localises to the flagellum axoneme. Its subcellular location is the cell projection. The protein resides in the kinocilium. In terms of biological role, functions as part of axonemal radial spoke complexes that play an important part in the motility of sperm and cilia. Essential for both the radial spoke head assembly and the central pair microtubule stability in ependymal motile cilia. Required for motility of olfactory and neural cilia and for the structural integrity of ciliary axonemes in both 9+0 and 9+2 motile cilia. This is Radial spoke head protein 9 homolog (Rsph9) from Mus musculus (Mouse).